A 347-amino-acid polypeptide reads, in one-letter code: 4-hydroxy-2-oxovalerate aldolase (347 aa).

The 251-residue stretch at Ile-2–Met-252 folds into the Pyruvate carboxyltransferase domain. Arg-10–Asp-11 serves as a coordination point for substrate. Asp-11 provides a ligand contact to Mn(2+). The Proton acceptor role is filled by His-14. Ser-164 and His-191 together coordinate substrate. The Mn(2+) site is built by His-191 and His-193.

It belongs to the 4-hydroxy-2-oxovalerate aldolase family.

It catalyses the reaction (S)-4-hydroxy-2-oxopentanoate = acetaldehyde + pyruvate. The chain is 4-hydroxy-2-oxovalerate aldolase (mhpE) from Burkholderia thailandensis (strain ATCC 700388 / DSM 13276 / CCUG 48851 / CIP 106301 / E264).